Reading from the N-terminus, the 466-residue chain is Zinc finger protein ZIC 3 (466 aa).

The span at 65–80 shows a compositional bias: polar residues; sequence DLSSGQSSAFTPQGSG. Residues 65 to 103 are disordered; the sequence is DLSSGQSSAFTPQGSGYANALGHHHHHHHHHHASQVPTY. Positions 86–97 are enriched in basic residues; it reads GHHHHHHHHHHA. K247 participates in a covalent cross-link: Glycyl lysine isopeptide (Lys-Gly) (interchain with G-Cter in SUMO2). A C2H2-type 1; atypical zinc finger spans residues 250–285; it reads LSCKWIEEAQLSRPKKSCDRTFSTMHELVTHVTMEH. The C2H2-type 2; atypical zinc-finger motif lies at 294–321; the sequence is HVCYWEECPREGKSFKAKYKLVNHIRVH. 2 consecutive short sequence motifs (nuclear localization signal) follow at residues 296-321 and 329-351; these read CYWEECPREGKSFKAKYKLVNHIRVH and CPFPGCGKIFARSENLKIHKRTH. 3 C2H2-type zinc fingers span residues 327-351, 357-381, and 387-409; these read FPCPFPGCGKIFARSENLKIHKRTH, FKCEFEGCDRRFANSSDRKKHMHVH, and YICKVCDKSYTHPSSLRKHMKVH. Residues 403–466 form a disordered region; it reads RKHMKVHESQ…LPPNFNEWYV (64 aa). Positions 411-427 are enriched in low complexity; sequence SQGSDSSPAASSGYESS. The segment covering 434 to 454 has biased composition (polar residues); that stretch reads SANSKDTTKTPSAVQTSTSHN.

It belongs to the GLI C2H2-type zinc-finger protein family. Interacts with KPNA1 and KPNA6. Interacts (via C2H2-type domains 3, 4 and 5) with GLI3; the interaction enhances its transcriptional activity. Interacts (via the C2H2-type domains 3, 4 and 5) with MDFIC (via the C2H2-type domains 3, 4 and 5); the interaction reduces its transcriptional activity. CNS. A high level expression is seen in the cerebellum.

The protein resides in the nucleus. The protein localises to the cytoplasm. Its function is as follows. Acts as a transcriptional activator. Required in the earliest stages in both axial midline development and left-right (LR) asymmetry specification. Binds to the minimal GLI-consensus sequence 5'-GGGTGGTC-3'. The protein is Zinc finger protein ZIC 3 (Zic3) of Mus musculus (Mouse).